Reading from the N-terminus, the 664-residue chain is E3 ubiquitin-protein ligase CHFR (664 aa).

Residues 1-21 (MERPEEGKQSPPPQPWGRLLR) form a disordered region. The FHA domain occupies 38–89 (WTIGRRRGCDLSFPSNKLVSGDHCRIVVDEKSGQVTLEDTSTSGTVINKLKV). The disordered stretch occupies residues 142–267 (FHGTKDTSGA…KKMRGDGDLD (126 aa)). Residues 186-198 (PTASASSTEPSPA) are compositionally biased toward low complexity. Ser-244 bears the Phosphoserine mark. Over residues 254–264 (EPVKKKMRGDG) the composition is skewed to basic and acidic residues. The segment at 304–343 (CIICQDLLHDCVSLQPCMHTFCAACYSGWMERSSLCPTCR) adopts an RING-type zinc-finger fold. Thr-386 bears the Phosphothreonine mark. 2 disordered regions span residues 388-417 (DMLQ…VDSE) and 439-461 (AQPP…GDAP). The span at 400–417 (DEEGSSEDLLELSDVDSE) shows a compositional bias: acidic residues. The PBZ-type zinc-finger motif lies at 633–655 (PDCYWGRNCRTQVKAHHAMKFNH).

The protein belongs to the CHFR family. As to quaternary structure, interacts with HDAC1 and HDAC2. Interacts with PML (with sumoylated form of PML). Post-translationally, poly-ADP-ribosylated. In addition to binding non covalently poly(ADP-ribose) via its PBZ-type zinc finger, the protein is also covalently poly-ADP-ribosylated by PARP1. Autoubiquitinated; may regulate its cellular level. In terms of processing, phosphorylated by PKB. Phosphorylation may affect its E3 ligase activity. As to expression, ubiquitous.

It is found in the nucleus. The protein localises to the PML body. It catalyses the reaction S-ubiquitinyl-[E2 ubiquitin-conjugating enzyme]-L-cysteine + [acceptor protein]-L-lysine = [E2 ubiquitin-conjugating enzyme]-L-cysteine + N(6)-ubiquitinyl-[acceptor protein]-L-lysine.. It participates in protein modification; protein ubiquitination. E3 ubiquitin-protein ligase that functions in the antephase checkpoint by actively delaying passage into mitosis in response to microtubule poisons. Acts in early prophase before chromosome condensation, when the centrosome move apart from each other along the periphery of the nucleus. Probably involved in signaling the presence of mitotic stress caused by microtubule poisons by mediating the 'Lys-48'-linked ubiquitination of target proteins, leading to their degradation by the proteasome. Promotes the ubiquitination and subsequent degradation of AURKA and PLK1. Probably acts as a tumor suppressor, possibly by mediating the polyubiquitination of HDAC1, leading to its degradation. May also promote the formation of 'Lys-63'-linked polyubiquitin chains and functions with the specific ubiquitin-conjugating UBC13-MMS2 (UBE2N-UBE2V2) heterodimer. Substrates that are polyubiquitinated at 'Lys-63' are usually not targeted for degradation, but are rather involved in signaling cellular stress. This Homo sapiens (Human) protein is E3 ubiquitin-protein ligase CHFR (CHFR).